We begin with the raw amino-acid sequence, 79 residues long: Sec-independent protein translocase protein TatA (79 aa).

Residues 1 to 21 (MGGISIWQLLIILVIVVLLFG) traverse the membrane as a helical segment. Positions 45–79 (EEEKDADFEQKKQVEEKSAAEPVSTETQSDVKEKS) are disordered. The segment covering 51–63 (DFEQKKQVEEKSA) has biased composition (basic and acidic residues).

It belongs to the TatA/E family. The Tat system comprises two distinct complexes: a TatABC complex, containing multiple copies of TatA, TatB and TatC subunits, and a separate TatA complex, containing only TatA subunits. Substrates initially bind to the TatABC complex, which probably triggers association of the separate TatA complex to form the active translocon.

The protein localises to the cell inner membrane. Its function is as follows. Part of the twin-arginine translocation (Tat) system that transports large folded proteins containing a characteristic twin-arginine motif in their signal peptide across membranes. TatA could form the protein-conducting channel of the Tat system. In Alteromonas mediterranea (strain DSM 17117 / CIP 110805 / LMG 28347 / Deep ecotype), this protein is Sec-independent protein translocase protein TatA.